Consider the following 141-residue polypeptide: Hemoglobin subunit alpha (141 aa).

The Globin domain occupies 1 to 141; that stretch reads VLSSADKNNV…VSTVLTSKYR (141 aa). Ser3 bears the Phosphoserine mark. N6-succinyllysine occurs at positions 7 and 11. Lys16 carries the N6-acetyllysine; alternate modification. At Lys16 the chain carries N6-succinyllysine; alternate. At Tyr24 the chain carries Phosphotyrosine. At Ser35 the chain carries Phosphoserine. Lys40 bears the N6-succinyllysine mark. Ser49 is modified (phosphoserine). His58 contacts O2. His87 serves as a coordination point for heme b. Ser102 is subject to Phosphoserine. Thr108 is subject to Phosphothreonine. A Phosphoserine modification is found at Ser124. A phosphothreonine mark is found at Thr134 and Thr137. Ser138 carries the post-translational modification Phosphoserine.

It belongs to the globin family. Heterotetramer of two alpha chains and two beta chains. In terms of tissue distribution, red blood cells.

Functionally, involved in oxygen transport from the lung to the various peripheral tissues. In terms of biological role, hemopressin acts as an antagonist peptide of the cannabinoid receptor CNR1. Hemopressin-binding efficiently blocks cannabinoid receptor CNR1 and subsequent signaling. The chain is Hemoglobin subunit alpha (HBA) from Panthera pardus saxicolor (Northern Persian leopard).